A 360-amino-acid polypeptide reads, in one-letter code: Peptide chain release factor 1 (360 aa).

Gln235 carries the N5-methylglutamine modification.

It belongs to the prokaryotic/mitochondrial release factor family. Methylated by PrmC. Methylation increases the termination efficiency of RF1.

The protein resides in the cytoplasm. Functionally, peptide chain release factor 1 directs the termination of translation in response to the peptide chain termination codons UAG and UAA. In Burkholderia cenocepacia (strain HI2424), this protein is Peptide chain release factor 1.